The primary structure comprises 208 residues: MLNIDKLIIGFDSALRTLLAPANTLRPVPGKDLPENELSEIEKRESAALMRINHVGEVCAQALYQGQALTARNDRVRQALDQAAREETEHLAWTERRIAELGGRKSFLNPLWYGGSFTLGLVAGVLGDKWNLGFLAETERQVEAHLADHLQRLPHQDVRSRAIVTQMKVDEACHATMAVSHGGGQLPAPVKVAMKFSSRIMTRTAYWV.

Fe cation-binding residues include Glu-57, Glu-87, His-90, Glu-139, Glu-171, and His-174.

It belongs to the COQ7 family. It depends on Fe cation as a cofactor.

The protein resides in the cell membrane. The catalysed reaction is a 5-methoxy-2-methyl-3-(all-trans-polyprenyl)benzene-1,4-diol + AH2 + O2 = a 3-demethylubiquinol + A + H2O. It participates in cofactor biosynthesis; ubiquinone biosynthesis. Catalyzes the hydroxylation of 2-nonaprenyl-3-methyl-6-methoxy-1,4-benzoquinol during ubiquinone biosynthesis. The polypeptide is 3-demethoxyubiquinol 3-hydroxylase (Nitrosomonas europaea (strain ATCC 19718 / CIP 103999 / KCTC 2705 / NBRC 14298)).